Consider the following 505-residue polypeptide: Glucan endo-1,3-beta-glucosidase 4 (505 aa).

An N-terminal signal peptide occupies residues 1 to 23 (MLLPRWFAEALLLLLSILACSNA). 2 N-linked (GlcNAc...) asparagine glycosylation sites follow: Asn70 and Asn110. Residue Glu119 is the Proton donor of the active site. N-linked (GlcNAc...) asparagine glycans are attached at residues Asn178 and Asn256. The active-site Nucleophile is the Glu266. 3 N-linked (GlcNAc...) asparagine glycosylation sites follow: Asn298, Asn338, and Asn357. A disulfide bond links Cys363 and Cys426. The N-linked (GlcNAc...) asparagine glycan is linked to Asn453. Ala474 carries the GPI-anchor amidated alanine lipid modification. Residues 475–505 (NARIIFSYHLPILAPLALTLLQLLLQHDRLL) constitute a propeptide, removed in mature form.

The protein belongs to the glycosyl hydrolase 17 family. In terms of processing, contains two additional disulfide bonds.

It localises to the cell membrane. It carries out the reaction Hydrolysis of (1-&gt;3)-beta-D-glucosidic linkages in (1-&gt;3)-beta-D-glucans.. This is Glucan endo-1,3-beta-glucosidase 4 from Arabidopsis thaliana (Mouse-ear cress).